The following is a 287-amino-acid chain: Energy-coupling factor transporter ATP-binding protein EcfA2 (287 aa).

The ABC transporter domain maps to 3-246; sequence VKFSQVSYVY…TNYVNQLHLD (244 aa). An ATP-binding site is contributed by 40-47; it reads GQTGSGKS.

It belongs to the ABC transporter superfamily. Energy-coupling factor EcfA family. Forms a stable energy-coupling factor (ECF) transporter complex composed of 2 membrane-embedded substrate-binding proteins (S component), 2 ATP-binding proteins (A component) and 2 transmembrane proteins (T component).

The protein localises to the cell membrane. Functionally, ATP-binding (A) component of a common energy-coupling factor (ECF) ABC-transporter complex. Unlike classic ABC transporters this ECF transporter provides the energy necessary to transport a number of different substrates. The chain is Energy-coupling factor transporter ATP-binding protein EcfA2 from Staphylococcus saprophyticus subsp. saprophyticus (strain ATCC 15305 / DSM 20229 / NCIMB 8711 / NCTC 7292 / S-41).